Here is a 185-residue protein sequence, read N- to C-terminus: GTP cyclohydrolase 1 (185 aa).

Cys-75, His-78, and Cys-146 together coordinate Zn(2+).

This sequence belongs to the GTP cyclohydrolase I family. Toroid-shaped homodecamer, composed of two pentamers of five dimers.

It catalyses the reaction GTP + H2O = 7,8-dihydroneopterin 3'-triphosphate + formate + H(+). Its pathway is cofactor biosynthesis; 7,8-dihydroneopterin triphosphate biosynthesis; 7,8-dihydroneopterin triphosphate from GTP: step 1/1. The chain is GTP cyclohydrolase 1 from Alkalilimnicola ehrlichii (strain ATCC BAA-1101 / DSM 17681 / MLHE-1).